The primary structure comprises 496 residues: uncharacterized protein (496 aa).

Residues methionine 1 to alanine 19 form the signal peptide. A helical membrane pass occupies residues alanine 45–alanine 67. Residues leucine 113 to alanine 137 are disordered.

Its subcellular location is the membrane. This is an uncharacterized protein from Nostoc sp. (strain PCC 7120 / SAG 25.82 / UTEX 2576).